The chain runs to 444 residues: 23S rRNA (uracil(1939)-C(5))-methyltransferase RlmD (444 aa).

Residues 11-70 (NSIKNHILKNIKVEKLDHRGRGLAYFQNKPLFIDGALAGELLEVQIVESKKRYSKGKIKK) form the TRAM domain. 4 residues coordinate [4Fe-4S] cluster: Cys83, Cys89, Cys92, and Cys171. Gln277, Phe306, Asn311, Glu327, Asp354, and Asp376 together coordinate S-adenosyl-L-methionine. Catalysis depends on Cys402, which acts as the Nucleophile.

Belongs to the class I-like SAM-binding methyltransferase superfamily. RNA M5U methyltransferase family. RlmD subfamily.

The enzyme catalyses uridine(1939) in 23S rRNA + S-adenosyl-L-methionine = 5-methyluridine(1939) in 23S rRNA + S-adenosyl-L-homocysteine + H(+). In terms of biological role, catalyzes the formation of 5-methyl-uridine at position 1939 (m5U1939) in 23S rRNA. The sequence is that of 23S rRNA (uracil(1939)-C(5))-methyltransferase RlmD from Psychromonas ingrahamii (strain DSM 17664 / CCUG 51855 / 37).